Consider the following 679-residue polypeptide: MEHVRVIFFFACFLTLAPFHAFAQVDSYEFDPDFNCVDRGNFTANSTFAGNLNRLVSSLSSLKSQAYGFYNLSSGDSSGERAYAIGLCRREVKRDDCVSCIQTAARNLTKQCPLTKQAVVWYTHCMFRYSNRTIYGRKETNPTKAFIAGEEISANRDDFERLQRGLLDRLKGIAAAGGPNRKYAQGNGSASAGYRRFYGTVQCTPDLSEQDCNDCLVFGFENIPSCCDAEIGLRWFSPSCNFRFETWRFYEFDADLEPDPPAIQPADSPQSAARTERTGKGKGGSKVIIAIVIPILLVALLAICLCLVLKWRKNKSGYKNKVLGKSPLSGSIAEDEFSNTESLLVHFETLKTATDNFSSENELGRGGFGSVYKGVFPQGQEIAVKRLSGNSGQGDNEFKNEILLLAKLQHRNLVRLIGFCIQGEERLLVYEFIKNASLDQFIFDTEKRQLLDWVVRYKMIGGIARGLLYLHEDSRFRIIHRDLKASNILLDQEMNPKIADFGLAKLFDSGQTMTHRFTSRIAGTYGYMAPEYAMHGQFSVKTDVFSFGVLVIEIITGKRNNNGGSNGDEDAEDLLSWVWRSWREDTILSVIDPSLTAGSRNEILRCIHIGLLCVQESAATRPTMATVSLMLNSYSFTLPTPLRPAFVLESVVIPSNVSSSTEGLQMSSNDVTVSEFSPR.

Positions 1–23 (MEHVRVIFFFACFLTLAPFHAFA) are cleaved as a signal peptide. Residues 24–286 (QVDSYEFDPD…RTGKGKGGSK (263 aa)) are Extracellular-facing. Gnk2-homologous domains are found at residues 30–134 (FDPD…NRTI) and 140–249 (TNPT…TWRF). 6 N-linked (GlcNAc...) asparagine glycosylation sites follow: N41, N45, N71, N107, N131, and N187. Residues 260-281 (PPAIQPADSPQSAARTERTGKG) are disordered. A helical membrane pass occupies residues 287 to 307 (VIIAIVIPILLVALLAICLCL). At 308–679 (VLKWRKNKSG…DVTVSEFSPR (372 aa)) the chain is on the cytoplasmic side. Positions 357-637 (FSSENELGRG…SLMLNSYSFT (281 aa)) constitute a Protein kinase domain. Residues 363–371 (LGRGGFGSV) and K385 each bind ATP. Phosphotyrosine is present on Y430. D482 serves as the catalytic Proton acceptor. S486 carries the post-translational modification Phosphoserine. Residue T524 is modified to Phosphothreonine. Y532 bears the Phosphotyrosine mark. The tract at residues 659–679 (SSTEGLQMSSNDVTVSEFSPR) is disordered.

This sequence belongs to the protein kinase superfamily. Ser/Thr protein kinase family. CRK subfamily.

It localises to the membrane. It carries out the reaction L-seryl-[protein] + ATP = O-phospho-L-seryl-[protein] + ADP + H(+). The catalysed reaction is L-threonyl-[protein] + ATP = O-phospho-L-threonyl-[protein] + ADP + H(+). The protein is Cysteine-rich receptor-like protein kinase 29 (CRK29) of Arabidopsis thaliana (Mouse-ear cress).